A 335-amino-acid chain; its full sequence is Biotin synthase (335 aa).

One can recognise a Radical SAM core domain in the interval 46–274 (YDIQLASLFS…ESKIRLSAGR (229 aa)). Cys61, Cys65, and Cys68 together coordinate [4Fe-4S] cluster. [2Fe-2S] cluster-binding residues include Cys105, Cys137, Cys197, and Arg269.

Belongs to the radical SAM superfamily. Biotin synthase family. Homodimer. [4Fe-4S] cluster is required as a cofactor. It depends on [2Fe-2S] cluster as a cofactor.

It carries out the reaction (4R,5S)-dethiobiotin + (sulfur carrier)-SH + 2 reduced [2Fe-2S]-[ferredoxin] + 2 S-adenosyl-L-methionine = (sulfur carrier)-H + biotin + 2 5'-deoxyadenosine + 2 L-methionine + 2 oxidized [2Fe-2S]-[ferredoxin]. It functions in the pathway cofactor biosynthesis; biotin biosynthesis; biotin from 7,8-diaminononanoate: step 2/2. Functionally, catalyzes the conversion of dethiobiotin (DTB) to biotin by the insertion of a sulfur atom into dethiobiotin via a radical-based mechanism. This is Biotin synthase from Prochlorococcus marinus (strain MIT 9301).